We begin with the raw amino-acid sequence, 47 residues long: Photosystem II reaction center protein Psb30 (47 aa).

The chain crosses the membrane as a helical span at residues 19 to 39 (VIFQLLSVALIVIAGPVVIFL).

The protein belongs to the Psb30/Ycf12 family. In terms of assembly, PSII is composed of 1 copy each of membrane proteins PsbA, PsbB, PsbC, PsbD, PsbE, PsbF, PsbH, PsbI, PsbJ, PsbK, PsbL, PsbM, PsbT, PsbX, PsbY, PsbZ, Psb30/Ycf12, peripheral proteins PsbO, CyanoQ (PsbQ), PsbU, PsbV and a large number of cofactors. It forms dimeric complexes.

It is found in the cellular thylakoid membrane. Its function is as follows. A core subunit of photosystem II (PSII), probably helps stabilize the reaction center. This Nostoc punctiforme (strain ATCC 29133 / PCC 73102) protein is Photosystem II reaction center protein Psb30.